Reading from the N-terminus, the 94-residue chain is Co-chaperonin GroES (94 aa).

Belongs to the GroES chaperonin family. Heptamer of 7 subunits arranged in a ring. Interacts with the chaperonin GroEL.

It localises to the cytoplasm. Functionally, together with the chaperonin GroEL, plays an essential role in assisting protein folding. The GroEL-GroES system forms a nano-cage that allows encapsulation of the non-native substrate proteins and provides a physical environment optimized to promote and accelerate protein folding. GroES binds to the apical surface of the GroEL ring, thereby capping the opening of the GroEL channel. This chain is Co-chaperonin GroES, found in Leuconostoc citreum (strain KM20).